Consider the following 753-residue polypeptide: 5-methyltetrahydropteroyltriglutamate--homocysteine methyltransferase (753 aa).

5-methyltetrahydropteroyltri-L-glutamate-binding positions include 19 to 22 (RELK) and Arg113. L-homocysteine-binding positions include 430-432 (IGS) and Glu483. Residues 430 to 432 (IGS) and Glu483 each bind L-methionine. Residues 514 to 515 (RC) and Trp560 each bind 5-methyltetrahydropteroyltri-L-glutamate. L-homocysteine is bound at residue Asp598. Residue Asp598 participates in L-methionine binding. Glu604 provides a ligand contact to 5-methyltetrahydropteroyltri-L-glutamate. Positions 640, 642, and 664 each coordinate Zn(2+). Residue His693 is the Proton donor of the active site. Position 725 (Cys725) interacts with Zn(2+).

Belongs to the vitamin-B12 independent methionine synthase family. Zn(2+) serves as cofactor.

It catalyses the reaction 5-methyltetrahydropteroyltri-L-glutamate + L-homocysteine = tetrahydropteroyltri-L-glutamate + L-methionine. It participates in amino-acid biosynthesis; L-methionine biosynthesis via de novo pathway; L-methionine from L-homocysteine (MetE route): step 1/1. Its function is as follows. Catalyzes the transfer of a methyl group from 5-methyltetrahydrofolate to homocysteine resulting in methionine formation. This Rhodococcus jostii (strain RHA1) protein is 5-methyltetrahydropteroyltriglutamate--homocysteine methyltransferase.